We begin with the raw amino-acid sequence, 156 residues long: Small ribosomal subunit protein uS7 (156 aa).

The protein belongs to the universal ribosomal protein uS7 family. As to quaternary structure, part of the 30S ribosomal subunit. Contacts proteins S9 and S11.

One of the primary rRNA binding proteins, it binds directly to 16S rRNA where it nucleates assembly of the head domain of the 30S subunit. Is located at the subunit interface close to the decoding center, probably blocks exit of the E-site tRNA. The polypeptide is Small ribosomal subunit protein uS7 (Desulfosudis oleivorans (strain DSM 6200 / JCM 39069 / Hxd3) (Desulfococcus oleovorans)).